The primary structure comprises 348 residues: Elongation factor Ts (348 aa).

The segment at 80-83 (TDFV) is involved in Mg(2+) ion dislocation from EF-Tu.

This sequence belongs to the EF-Ts family.

The protein localises to the cytoplasm. In terms of biological role, associates with the EF-Tu.GDP complex and induces the exchange of GDP to GTP. It remains bound to the aminoacyl-tRNA.EF-Tu.GTP complex up to the GTP hydrolysis stage on the ribosome. The protein is Elongation factor Ts of Streptococcus mutans serotype c (strain ATCC 700610 / UA159).